The chain runs to 414 residues: CCA-adding enzyme (414 aa).

ATP contacts are provided by Gly8 and Arg11. Positions 8 and 11 each coordinate CTP. Residues Asp21 and Asp23 each coordinate Mg(2+). Positions 91, 137, and 140 each coordinate ATP. CTP contacts are provided by Arg91, Arg137, and Arg140.

The protein belongs to the tRNA nucleotidyltransferase/poly(A) polymerase family. Bacterial CCA-adding enzyme type 2 subfamily. It depends on Mg(2+) as a cofactor.

The enzyme catalyses a tRNA precursor + 2 CTP + ATP = a tRNA with a 3' CCA end + 3 diphosphate. It catalyses the reaction a tRNA with a 3' CCA end + 2 CTP + ATP = a tRNA with a 3' CCACCA end + 3 diphosphate. In terms of biological role, catalyzes the addition and repair of the essential 3'-terminal CCA sequence in tRNAs without using a nucleic acid template. Adds these three nucleotides in the order of C, C, and A to the tRNA nucleotide-73, using CTP and ATP as substrates and producing inorganic pyrophosphate. tRNA 3'-terminal CCA addition is required both for tRNA processing and repair. Also involved in tRNA surveillance by mediating tandem CCA addition to generate a CCACCA at the 3' terminus of unstable tRNAs. While stable tRNAs receive only 3'-terminal CCA, unstable tRNAs are marked with CCACCA and rapidly degraded. In Buchnera aphidicola subsp. Acyrthosiphon pisum (strain Tuc7), this protein is CCA-adding enzyme.